The chain runs to 223 residues: Ribose-5-phosphate isomerase A (223 aa).

Residues Thr32–Thr35, Asp83–Asp86, and Lys96–Gly99 each bind substrate. The active-site Proton acceptor is Glu105. Position 123 (Lys123) interacts with substrate.

The protein belongs to the ribose 5-phosphate isomerase family. Homodimer.

The catalysed reaction is aldehydo-D-ribose 5-phosphate = D-ribulose 5-phosphate. The protein operates within carbohydrate degradation; pentose phosphate pathway; D-ribose 5-phosphate from D-ribulose 5-phosphate (non-oxidative stage): step 1/1. Its function is as follows. Catalyzes the reversible conversion of ribose-5-phosphate to ribulose 5-phosphate. This Acinetobacter baumannii (strain AYE) protein is Ribose-5-phosphate isomerase A.